We begin with the raw amino-acid sequence, 154 residues long: Ribosome maturation factor RimP (154 aa).

The protein belongs to the RimP family.

It localises to the cytoplasm. In terms of biological role, required for maturation of 30S ribosomal subunits. This is Ribosome maturation factor RimP from Natranaerobius thermophilus (strain ATCC BAA-1301 / DSM 18059 / JW/NM-WN-LF).